Reading from the N-terminus, the 361-residue chain is Phospho-N-acetylmuramoyl-pentapeptide-transferase (361 aa).

The next 10 helical transmembrane spans lie at Gly27–Leu47, Thr72–Ala92, Tyr98–Phe118, Leu135–Glu155, Thr169–Ala189, Gly200–Val220, Ile240–Pro260, Ala263–Val283, Ile289–Val309, and Gln338–Leu358.

The protein belongs to the glycosyltransferase 4 family. MraY subfamily. The cofactor is Mg(2+).

The protein resides in the cell inner membrane. It catalyses the reaction UDP-N-acetyl-alpha-D-muramoyl-L-alanyl-gamma-D-glutamyl-meso-2,6-diaminopimeloyl-D-alanyl-D-alanine + di-trans,octa-cis-undecaprenyl phosphate = di-trans,octa-cis-undecaprenyl diphospho-N-acetyl-alpha-D-muramoyl-L-alanyl-D-glutamyl-meso-2,6-diaminopimeloyl-D-alanyl-D-alanine + UMP. It participates in cell wall biogenesis; peptidoglycan biosynthesis. Catalyzes the initial step of the lipid cycle reactions in the biosynthesis of the cell wall peptidoglycan: transfers peptidoglycan precursor phospho-MurNAc-pentapeptide from UDP-MurNAc-pentapeptide onto the lipid carrier undecaprenyl phosphate, yielding undecaprenyl-pyrophosphoryl-MurNAc-pentapeptide, known as lipid I. This Dinoroseobacter shibae (strain DSM 16493 / NCIMB 14021 / DFL 12) protein is Phospho-N-acetylmuramoyl-pentapeptide-transferase.